Consider the following 226-residue polypeptide: Putative ankyrin repeat protein RF_0939 (226 aa).

ANK repeat units follow at residues valine 56–methionine 86, phenylalanine 91–glycine 120, leucine 125–glutamine 154, and serine 157–alanine 194.

The polypeptide is Putative ankyrin repeat protein RF_0939 (Rickettsia felis (strain ATCC VR-1525 / URRWXCal2) (Rickettsia azadi)).